The primary structure comprises 532 residues: Transcriptional regulatory protein RtcR (532 aa).

Positions 186-424 constitute a Sigma-54 factor interaction domain; that stretch reads IATRNPHFNR…LSASVTRMAT (239 aa). ATP-binding positions include 215-222 and 281-290; these read GPTGAGKS and ANGGMLFLDE. The segment at residues 485 to 504 is a DNA-binding region (H-T-H motif); sequence KSLSAAGRQLFDVSRQGKAS.

Transcriptional repressor of the rtcAB genes. Interacts with sigma-54. In Escherichia coli (strain K12), this protein is Transcriptional regulatory protein RtcR (rtcR).